We begin with the raw amino-acid sequence, 154 residues long: Endoribonuclease YbeY (154 aa).

The Zn(2+) site is built by H114, H118, and H124.

Belongs to the endoribonuclease YbeY family. Zn(2+) is required as a cofactor.

It is found in the cytoplasm. Single strand-specific metallo-endoribonuclease involved in late-stage 70S ribosome quality control and in maturation of the 3' terminus of the 16S rRNA. This Anaplasma phagocytophilum (strain HZ) protein is Endoribonuclease YbeY.